The following is an 89-amino-acid chain: Small ribosomal subunit protein uS15 (89 aa).

The protein belongs to the universal ribosomal protein uS15 family. Part of the 30S ribosomal subunit. Forms a bridge to the 50S subunit in the 70S ribosome, contacting the 23S rRNA.

In terms of biological role, one of the primary rRNA binding proteins, it binds directly to 16S rRNA where it helps nucleate assembly of the platform of the 30S subunit by binding and bridging several RNA helices of the 16S rRNA. Forms an intersubunit bridge (bridge B4) with the 23S rRNA of the 50S subunit in the ribosome. In Lysinibacillus sphaericus (strain C3-41), this protein is Small ribosomal subunit protein uS15.